The chain runs to 231 residues: Probable intron-encoded endonuclease 1 (231 aa).

This sequence belongs to the LAGLIDADG endonuclease family.

The protein resides in the mitochondrion. In terms of biological role, endonuclease involved in mitochondrial 21S rRNA gene intron homing. The sequence is that of Probable intron-encoded endonuclease 1 from Wickerhamomyces canadensis (Yeast).